Reading from the N-terminus, the 61-residue chain is Putative antitoxin APE_0472b.1 (61 aa).

This sequence belongs to the UPF0165 family.

Its function is as follows. Possibly the antitoxin component of a type II toxin-antitoxin (TA) system. The polypeptide is Putative antitoxin APE_0472b.1 (Aeropyrum pernix (strain ATCC 700893 / DSM 11879 / JCM 9820 / NBRC 100138 / K1)).